A 497-amino-acid polypeptide reads, in one-letter code: uncharacterized protein (497 aa).

The disordered stretch occupies residues 58–79; the sequence is ISTRSFRNDGNDSDPQTLDPDA. 12 consecutive transmembrane segments (helical) span residues 86-106, 120-140, 155-175, 180-200, 222-242, 258-278, 309-329, 348-368, 378-398, 407-427, 438-458, and 468-488; these read IAFV…ALPI, FSGL…YPML, FRPL…YSLA, WLYL…MFLY, LNIL…GLLA, VGSW…SIFF, FMLV…AGYQ, GNFL…STFL, MLYG…LDVL, FVLY…LISL, ILVG…GAIC, and VGFI…LLFL.

The protein belongs to the major facilitator superfamily.

It localises to the membrane. This is an uncharacterized protein from Schizosaccharomyces pombe (strain 972 / ATCC 24843) (Fission yeast).